Here is a 261-residue protein sequence, read N- to C-terminus: NAD-capped RNA hydrolase NudC (261 aa).

2 residues coordinate substrate: Lys25 and Arg69. Cys98 and Cys101 together coordinate Zn(2+). Position 111 (Glu111) interacts with substrate. Zn(2+) contacts are provided by Cys116 and Cys119. A substrate-binding site is contributed by Tyr124. The Nudix hydrolase domain occupies 125–248; the sequence is PQIAPCVIVA…TVARRLIEDT (124 aa). A divalent metal cation contacts are provided by Ala158, Glu174, and Glu178. Residues 159-180 carry the Nudix box motif; sequence GFVEVGETLEQAVSREVLEESN. 192–199 contacts substrate; the sequence is QPWPFPHS. Residue Glu219 coordinates a divalent metal cation. Ala241 contributes to the substrate binding site.

It belongs to the Nudix hydrolase family. NudC subfamily. In terms of assembly, homodimer. It depends on Mg(2+) as a cofactor. Mn(2+) is required as a cofactor. Zn(2+) serves as cofactor.

The enzyme catalyses a 5'-end NAD(+)-phospho-ribonucleoside in mRNA + H2O = a 5'-end phospho-adenosine-phospho-ribonucleoside in mRNA + beta-nicotinamide D-ribonucleotide + 2 H(+). It carries out the reaction NAD(+) + H2O = beta-nicotinamide D-ribonucleotide + AMP + 2 H(+). It catalyses the reaction NADH + H2O = reduced beta-nicotinamide D-ribonucleotide + AMP + 2 H(+). Functionally, mRNA decapping enzyme that specifically removes the nicotinamide adenine dinucleotide (NAD) cap from a subset of mRNAs by hydrolyzing the diphosphate linkage to produce nicotinamide mononucleotide (NMN) and 5' monophosphate mRNA. The NAD-cap is present at the 5'-end of some mRNAs and stabilizes RNA against 5'-processing. Has preference for mRNAs with a 5'-end purine. Catalyzes the hydrolysis of a broad range of dinucleotide pyrophosphates. The sequence is that of NAD-capped RNA hydrolase NudC from Yersinia enterocolitica serotype O:8 / biotype 1B (strain NCTC 13174 / 8081).